The primary structure comprises 100 residues: MELTPREKDKLLLFTAALLAERRLARGLKLNYPESVALISAFIMEGARDGKSVAALMEEGRHVLSREQVMEGIPEMIPDIQVEATFPDGSKLVTVHNPII.

The protein belongs to the urease gamma subunit family. As to quaternary structure, heterotrimer of UreA (gamma), UreB (beta) and UreC (alpha) subunits. Three heterotrimers associate to form the active enzyme.

The protein resides in the cytoplasm. It catalyses the reaction urea + 2 H2O + H(+) = hydrogencarbonate + 2 NH4(+). It functions in the pathway nitrogen metabolism; urea degradation; CO(2) and NH(3) from urea (urease route): step 1/1. The sequence is that of Urease subunit gamma from Escherichia coli O157:H7 (strain EC4115 / EHEC).